A 290-amino-acid polypeptide reads, in one-letter code: 33 kDa chaperonin (290 aa).

2 cysteine pairs are disulfide-bonded: cysteine 235–cysteine 237 and cysteine 268–cysteine 271.

The protein belongs to the HSP33 family. Post-translationally, under oxidizing conditions two disulfide bonds are formed involving the reactive cysteines. Under reducing conditions zinc is bound to the reactive cysteines and the protein is inactive.

It localises to the cytoplasm. Redox regulated molecular chaperone. Protects both thermally unfolding and oxidatively damaged proteins from irreversible aggregation. Plays an important role in the bacterial defense system toward oxidative stress. The chain is 33 kDa chaperonin from Streptococcus pyogenes serotype M28 (strain MGAS6180).